A 90-amino-acid chain; its full sequence is uncharacterized protein (90 aa).

The first 20 residues, 1-20 (MAYKMLQVVLCSTLLIGALG), serve as a signal peptide directing secretion.

This is an uncharacterized protein from Homo sapiens (Human).